The following is a 587-amino-acid chain: Solute carrier family 13 member 2 (587 aa).

The next 4 membrane-spanning stretches (helical) occupy residues 13 to 33, 53 to 73, 86 to 106, and 136 to 156; these read FYLI…IVQT, ALPL…MGIM, TNIL…WNLH, and SMWI…HAVL. A disordered region spans residues 188-208; it reads KLDNGQPVSAPSEPRTQKTQE. Transmembrane regions (helical) follow at residues 264-284, 329-349, 367-387, 407-427, 445-465, 477-497, 506-526, and 535-555; these read FAFP…QVLF, VLFV…FPGW, TVAI…PGLM, TVND…FALA, PLQH…IAIF, LFLP…LYVM, LAFM…FGGL, and GFLL…SWSI.

It belongs to the SLC13A/DASS transporter (TC 2.A.47) family. NADC subfamily. Expressed in large and small intestine and in the kidney proximal tubules.

Its subcellular location is the apical cell membrane. It catalyses the reaction succinate(out) + 3 Na(+)(out) = succinate(in) + 3 Na(+)(in). It carries out the reaction fumarate(out) + 3 Na(+)(out) = fumarate(in) + 3 Na(+)(in). The catalysed reaction is 2-oxoglutarate(out) + 3 Na(+)(out) = 2-oxoglutarate(in) + 3 Na(+)(in). Its activity is regulated as follows. Li(+) decreases succinate transport in the presence of Na(+), by competing at one of the three cation binding sites. In terms of biological role, low-affinity sodium-dicarboxylate cotransporter, that mediates the entry of citric acid cycle intermediates, such as succinate, citrate, fumarate and alpha-ketoglutarate (2-oxoglutarate) into the small intestine and renal proximal tubule. Transports the dicarboxylate into the cell with a probable stoichiometry of 3 Na(+) for 1 divalent dicarboxylate, rendering the process electrogenic. Citrate is transported in protonated form as a divalent anion, rather than the trivalent form which is normally found in blood. Has a critical role in renal dicarboxylate transport. The protein is Solute carrier family 13 member 2 (Slc13a2) of Rattus norvegicus (Rat).